Here is a 187-residue protein sequence, read N- to C-terminus: Segregation and condensation protein B (187 aa).

It belongs to the ScpB family. In terms of assembly, homodimer. Homodimerization may be required to stabilize the binding of ScpA to the Smc head domains. Component of a cohesin-like complex composed of ScpA, ScpB and the Smc homodimer, in which ScpA and ScpB bind to the head domain of Smc. The presence of the three proteins is required for the association of the complex with DNA.

Its subcellular location is the cytoplasm. Participates in chromosomal partition during cell division. May act via the formation of a condensin-like complex containing Smc and ScpA that pull DNA away from mid-cell into both cell halves. In Agathobacter rectalis (strain ATCC 33656 / DSM 3377 / JCM 17463 / KCTC 5835 / VPI 0990) (Eubacterium rectale), this protein is Segregation and condensation protein B.